A 472-amino-acid polypeptide reads, in one-letter code: Trigger factor (472 aa).

Residues 174-261 enclose the PPIase FKBP-type domain; sequence GDIALVSFKG…LEDLKIKELP (88 aa). The interval 433-472 is disordered; sequence NNTVVEKPPEKARDQIKEKSSKKKTTKTNKEKKSSKTPKS. Basic and acidic residues predominate over residues 439-451; sequence KPPEKARDQIKEK.

This sequence belongs to the FKBP-type PPIase family. Tig subfamily.

Its subcellular location is the cytoplasm. It carries out the reaction [protein]-peptidylproline (omega=180) = [protein]-peptidylproline (omega=0). Functionally, involved in protein export. Acts as a chaperone by maintaining the newly synthesized protein in an open conformation. Functions as a peptidyl-prolyl cis-trans isomerase. The sequence is that of Trigger factor from Prochlorococcus marinus (strain NATL1A).